The sequence spans 492 residues: 6-phosphogluconate dehydrogenase, decarboxylating (492 aa).

Residues 13–18 (GLAVMG), 36–38 (NRT), 78–80 (VKA), and Asn-106 each bind NADP(+). A substrate-binding site is contributed by Asn-106. A Phosphoserine modification is found at Ser-107. 132–134 (SGG) lines the substrate pocket. Lys-187 acts as the Proton acceptor in catalysis. 190 to 191 (HN) is a binding site for substrate. Glu-194 functions as the Proton donor in the catalytic mechanism. Tyr-195 provides a ligand contact to substrate. Ser-215 is subject to Phosphoserine. Substrate is bound by residues Lys-264, Arg-291, Arg-449, and His-455.

The protein belongs to the 6-phosphogluconate dehydrogenase family. Homodimer.

It catalyses the reaction 6-phospho-D-gluconate + NADP(+) = D-ribulose 5-phosphate + CO2 + NADPH. It functions in the pathway carbohydrate degradation; pentose phosphate pathway; D-ribulose 5-phosphate from D-glucose 6-phosphate (oxidative stage): step 3/3. Catalyzes the oxidative decarboxylation of 6-phosphogluconate to ribulose 5-phosphate and CO(2), with concomitant reduction of NADP to NADPH. In Schizosaccharomyces pombe (strain 972 / ATCC 24843) (Fission yeast), this protein is 6-phosphogluconate dehydrogenase, decarboxylating.